A 1448-amino-acid polypeptide reads, in one-letter code: Sister chromatid cohesion protein PDS5 homolog B-A (1448 aa).

An HEAT repeat occupies 383 to 419 (LLVNDQLLNFVRERTLDKRWRVRKEAMMGLAQIYKKY). Polar residues predominate over residues 1141–1155 (AGKQMLSKSSRMETV). The disordered stretch occupies residues 1141–1448 (AGKQMLSKSS…TGRLRSAKKR (308 aa)). A compositionally biased stretch (low complexity) spans 1156 to 1168 (SNASSGSNPSSPG). Over residues 1177-1186 (MELDQSENED) the composition is skewed to acidic residues. 3 stretches are compositionally biased toward basic and acidic residues: residues 1196 to 1214 (KKSD…LEKP), 1233 to 1243 (ELSKPAQEPKS), and 1264 to 1273 (WQEKRLKEDL). The segment covering 1285–1294 (KKGRRGRPPK) has biased composition (basic residues). A DNA-binding region (a.T hook 1) is located at residues 1286 to 1298 (KGRRGRPPKSAKM). A compositionally biased stretch (acidic residues) spans 1324 to 1341 (PTDEDDHLEISEEQDFEN). The span at 1346–1356 (RKGRGSSRRTP) shows a compositional bias: basic residues. DNA-binding regions (a.T hook) lie at residues 1374 to 1386 (QKRR…TPTV) and 1390 to 1402 (KSHV…VVSK). A compositionally biased stretch (basic residues) spans 1389-1399 (KKSHVGRPRKV).

This sequence belongs to the PDS5 family. As to quaternary structure, interacts with the cohesin complex. Post-translationally, phosphorylated in mitotic cells.

It localises to the nucleus. Plays a role in androgen-induced proliferative arrest. Required for maintenance of sister chromatid cohesion during mitosis. This chain is Sister chromatid cohesion protein PDS5 homolog B-A (pds5b-a), found in Xenopus laevis (African clawed frog).